Here is a 276-residue protein sequence, read N- to C-terminus: Small ribosomal subunit protein uS3 (276 aa).

In terms of domain architecture, KH type-2 spans 38 to 106; that stretch reads IRRMMTKGME…QVQLNILEVK (69 aa). Low complexity predominate over residues 216–228; the sequence is NAAARAGNRPARG. The tract at residues 216–276 is disordered; the sequence is NAAARAGNRP…PAAESTGTEA (61 aa). A compositionally biased stretch (basic and acidic residues) spans 229–245; it reads GADRPAGRGGRGGERGG. Residues 254-269 show a composition bias toward low complexity; sequence PAAEAPKADAAAAPAA.

This sequence belongs to the universal ribosomal protein uS3 family. As to quaternary structure, part of the 30S ribosomal subunit. Forms a tight complex with proteins S10 and S14.

Its function is as follows. Binds the lower part of the 30S subunit head. Binds mRNA in the 70S ribosome, positioning it for translation. This chain is Small ribosomal subunit protein uS3, found in Streptomyces griseus subsp. griseus (strain JCM 4626 / CBS 651.72 / NBRC 13350 / KCC S-0626 / ISP 5235).